The primary structure comprises 2715 residues: G surface protein, allelic form 156 (2715 aa).

The first 20 residues, 1–20, serve as a signal peptide directing secretion; sequence MNNKFIIFSLLLALVASQTY. 34 PSA repeats span residues 111–171, 177–237, 243–303, 309–366, 372–404, 405–467, 473–530, 536–596, 602–673, 688–748, 752–812, 820–895, 934–1001, 1008–1067, 1073–1141, 1147–1215, 1221–1289, 1295–1363, 1369–1437, 1443–1507, 1513–1578, 1586–1652, 1693–1751, 1759–1819, 1827–1898, 1904–1976, 1984–2044, 2080–2149, 2155–2215, 2219–2286, 2290–2355, 2359–2430, 2434–2500, and 2505–2573; these read KTLD…NTCD, FATD…RICD, LTTD…KACA, IATN…KTCA, NNTHDLCTSYLSTCTVKSGGGCQNRTCANAPTT, MTTN…KTCV, NTTH…KQCV, TTTH…KACS, FTTT…KSCA, GFTF…KTCA, QTTH…ATCA, YDSD…GACT, GLTF…AECA, GLDH…SNCA, GLTT…THCP, GLTD…TECA, GLTN…TECA, GLTK…LNCS, GFVH…TDCA, TITF…ATCD, TFNH…KTCD, RDDD…LNCG, YDTH…KSCT, TTTH…KSCA, YDDD…KSCD, FATD…KNCS, LTSE…KDCQ, GTTH…TSCK, WNND…TSCA, YTTH…QSCA, GTTH…LTCA, and GTAT…TACT.

The protein localises to the cell membrane. Its function is as follows. This protein is the surface antigen or immobilization antigen of Paramecium primaurelia. In Paramecium primaurelia, this protein is G surface protein, allelic form 156 (156G).